A 287-amino-acid chain; its full sequence is Phosphatidylserine decarboxylase proenzyme (287 aa).

Catalysis depends on charge relay system; for autoendoproteolytic cleavage activity residues aspartate 90, histidine 147, and serine 252. Serine 252 functions as the Schiff-base intermediate with substrate; via pyruvic acid; for decarboxylase activity in the catalytic mechanism. The residue at position 252 (serine 252) is a Pyruvic acid (Ser); by autocatalysis.

Belongs to the phosphatidylserine decarboxylase family. PSD-B subfamily. Prokaryotic type I sub-subfamily. In terms of assembly, heterodimer of a large membrane-associated beta subunit and a small pyruvoyl-containing alpha subunit. Requires pyruvate as cofactor. In terms of processing, is synthesized initially as an inactive proenzyme. Formation of the active enzyme involves a self-maturation process in which the active site pyruvoyl group is generated from an internal serine residue via an autocatalytic post-translational modification. Two non-identical subunits are generated from the proenzyme in this reaction, and the pyruvate is formed at the N-terminus of the alpha chain, which is derived from the carboxyl end of the proenzyme. The autoendoproteolytic cleavage occurs by a canonical serine protease mechanism, in which the side chain hydroxyl group of the serine supplies its oxygen atom to form the C-terminus of the beta chain, while the remainder of the serine residue undergoes an oxidative deamination to produce ammonia and the pyruvoyl prosthetic group on the alpha chain. During this reaction, the Ser that is part of the protease active site of the proenzyme becomes the pyruvoyl prosthetic group, which constitutes an essential element of the active site of the mature decarboxylase.

It localises to the cell membrane. The enzyme catalyses a 1,2-diacyl-sn-glycero-3-phospho-L-serine + H(+) = a 1,2-diacyl-sn-glycero-3-phosphoethanolamine + CO2. The protein operates within phospholipid metabolism; phosphatidylethanolamine biosynthesis; phosphatidylethanolamine from CDP-diacylglycerol: step 2/2. Functionally, catalyzes the formation of phosphatidylethanolamine (PtdEtn) from phosphatidylserine (PtdSer). This Pseudomonas putida (strain W619) protein is Phosphatidylserine decarboxylase proenzyme.